The chain runs to 246 residues: NAD-dependent protein deacetylase (246 aa).

A Deacetylase sirtuin-type domain is found at 1–246 (MKMKEFLDLL…RRVMEEGGIS (246 aa)). 8 residues coordinate NAD(+): alanine 22, threonine 26, phenylalanine 33, arginine 34, glutamine 98, isoleucine 100, aspartate 101, and histidine 116. A nicotinamide-binding site is contributed by phenylalanine 33. 2 residues coordinate nicotinamide: isoleucine 100 and aspartate 101. Histidine 116 functions as the Proton acceptor in the catalytic mechanism. Zn(2+) is bound by residues cysteine 124, cysteine 127, cysteine 148, and cysteine 151. NAD(+) contacts are provided by serine 189, serine 190, asparagine 214, leucine 215, glycine 216, aspartate 231, and valine 232.

This sequence belongs to the sirtuin family. Class U subfamily. It depends on Zn(2+) as a cofactor.

It localises to the cytoplasm. The enzyme catalyses N(6)-acetyl-L-lysyl-[protein] + NAD(+) + H2O = 2''-O-acetyl-ADP-D-ribose + nicotinamide + L-lysyl-[protein]. With respect to regulation, non-competitively inhibited by nicotinamide in vitro and in vivo, but not by nicotinic acid. Nicotinamide inhibits the deacetylation activity by reacting with a reaction intermediate. Its function is as follows. NAD-dependent protein deacetylase which modulates the activities of several enzymes which are inactive in their acetylated form. Also has depropionylation activity in vitro. Also able to ADP-ribosylate peptide substrates with Arg or Lys in the +2 position. The role of this function in vivo is not clear. The protein is NAD-dependent protein deacetylase of Thermotoga maritima (strain ATCC 43589 / DSM 3109 / JCM 10099 / NBRC 100826 / MSB8).